The primary structure comprises 30 residues: Kappa-sparatoxin-Hv1b (30 aa).

Disulfide bonds link C3/C17, C10/C22, and C16/C26. Position 30 is a tryptophan amide (W30).

The protein belongs to the neurotoxin 10 (Hwtx-1) family. 19 (HpTX2) subfamily. In terms of tissue distribution, expressed by the venom gland.

It localises to the secreted. Inhibitor of voltage-gated potassium channels of the Kv4/KCND family. Inhibition of Kv4.3/KCND3 and Kv4.2/KCND2 is strongly voltage-dependent, while inhibition of Kv4.1/KCND1 shows less voltage-dependence. Its binding site may be near the potassium channel voltage sensor. Also blocks calcium channels. This Heteropoda venatoria (Brown huntsman spider) protein is Kappa-sparatoxin-Hv1b.